Here is a 425-residue protein sequence, read N- to C-terminus: Glutamyl-tRNA reductase (425 aa).

Residues 49–52 (TCNR), Ser-107, 112–114 (EPQ), and Gln-118 each bind substrate. Residue Cys-50 is the Nucleophile of the active site. 187–192 (GAGETI) serves as a coordination point for NADP(+).

It belongs to the glutamyl-tRNA reductase family. As to quaternary structure, homodimer.

It catalyses the reaction (S)-4-amino-5-oxopentanoate + tRNA(Glu) + NADP(+) = L-glutamyl-tRNA(Glu) + NADPH + H(+). Its pathway is porphyrin-containing compound metabolism; protoporphyrin-IX biosynthesis; 5-aminolevulinate from L-glutamyl-tRNA(Glu): step 1/2. In terms of biological role, catalyzes the NADPH-dependent reduction of glutamyl-tRNA(Glu) to glutamate 1-semialdehyde (GSA). This Pseudomonas entomophila (strain L48) protein is Glutamyl-tRNA reductase.